Consider the following 281-residue polypeptide: Bifunctional protein FolD (281 aa).

NADP(+)-binding positions include 159-161 (NRS), serine 184, and isoleucine 225.

This sequence belongs to the tetrahydrofolate dehydrogenase/cyclohydrolase family. In terms of assembly, homodimer.

The enzyme catalyses (6R)-5,10-methylene-5,6,7,8-tetrahydrofolate + NADP(+) = (6R)-5,10-methenyltetrahydrofolate + NADPH. It carries out the reaction (6R)-5,10-methenyltetrahydrofolate + H2O = (6R)-10-formyltetrahydrofolate + H(+). Its pathway is one-carbon metabolism; tetrahydrofolate interconversion. Functionally, catalyzes the oxidation of 5,10-methylenetetrahydrofolate to 5,10-methenyltetrahydrofolate and then the hydrolysis of 5,10-methenyltetrahydrofolate to 10-formyltetrahydrofolate. This Thermoplasma volcanium (strain ATCC 51530 / DSM 4299 / JCM 9571 / NBRC 15438 / GSS1) protein is Bifunctional protein FolD.